Consider the following 407-residue polypeptide: Na(+)-translocating NADH-quinone reductase subunit F (407 aa).

The chain crosses the membrane as a helical span at residues 3–23; that stretch reads IILGVVMFTLIVLALVLVILF. A 2Fe-2S ferredoxin-type domain is found at 32–126; that stretch reads GDITISINGD…DMDIELPEEI (95 aa). [2Fe-2S] cluster contacts are provided by Cys69, Cys75, Cys78, and Cys110. An FAD-binding FR-type domain is found at 129–269; sequence VKKWECTVIS…SGPFGEFFAK (141 aa). The catalytic stretch occupies residues 272–389; the sequence is DAEMVFIGGG…PMMNAAVIGM (118 aa).

It belongs to the NqrF family. In terms of assembly, composed of six subunits; NqrA, NqrB, NqrC, NqrD, NqrE and NqrF. Requires [2Fe-2S] cluster as cofactor. FAD is required as a cofactor.

Its subcellular location is the cell inner membrane. It carries out the reaction a ubiquinone + n Na(+)(in) + NADH + H(+) = a ubiquinol + n Na(+)(out) + NAD(+). NQR complex catalyzes the reduction of ubiquinone-1 to ubiquinol by two successive reactions, coupled with the transport of Na(+) ions from the cytoplasm to the periplasm. The first step is catalyzed by NqrF, which accepts electrons from NADH and reduces ubiquinone-1 to ubisemiquinone by a one-electron transfer pathway. This Vibrio vulnificus (strain CMCP6) protein is Na(+)-translocating NADH-quinone reductase subunit F.